Reading from the N-terminus, the 422-residue chain is Fasciclin-like arabinogalactan protein 10 (422 aa).

A signal peptide spans 1-25 (MATSRAFTLFAFTLSLLTVASTVSG). FAS1 domains are found at residues 26 to 172 (HNIT…NAPI) and 187 to 327 (GVSN…DNVL). N-linked (GlcNAc...) asparagine glycosylation is found at Asn-27, Asn-128, Asn-162, Asn-190, and Asn-244. The disordered stretch occupies residues 336-397 (SSSPAPAPEP…PTSSENSNAK (62 aa)). Over residues 340–374 (APAPEPVSAPTPTPAKSPSPVEAPSPTAASPPAPP) the composition is skewed to pro residues. Positions 386-397 (DSPTSSENSNAK) are enriched in polar residues. The GPI-anchor amidated asparagine moiety is linked to residue Asn-398. Residues 399–422 (AAFHVNAPALFTALVTIAATSLLL) constitute a propeptide, removed in mature form.

The protein belongs to the fasciclin-like AGP family.

It localises to the cell membrane. Functionally, may be a cell surface adhesion protein. The polypeptide is Fasciclin-like arabinogalactan protein 10 (FLA10) (Arabidopsis thaliana (Mouse-ear cress)).